The following is a 106-amino-acid chain: Small membrane A-kinase anchor protein (106 aa).

Glycine 2 carries the N-myristoyl glycine lipid modification. The S-palmitoyl cysteine moiety is linked to residue cysteine 3. Residue serine 40 is modified to Phosphoserine. The interval 62-85 (ALILEFADRLASEIVEDALQQWAC) is PKA-RI-binding. At serine 98 the chain carries Phosphoserine.

Belongs to the small membrane AKAP family. As to quaternary structure, interacts with PKA type I regulatory subunits PRKAR1A and PRKAR1B. Also binds to type II regulatory subunits, but at a tenfold lower affinity. Post-translationally, may be palmitoylated at Cys-3. In terms of tissue distribution, widely expressed, with very low levels in spleen and liver.

The protein resides in the cell membrane. Functionally, binds to type I regulatory subunits of protein kinase A (PKA-RI) and may anchor/target them to the plasma membrane. The chain is Small membrane A-kinase anchor protein from Mus musculus (Mouse).